Consider the following 176-residue polypeptide: 3-hydroxydecanoyl-[acyl-carrier-protein] dehydratase (176 aa).

Residue His-71 is part of the active site.

Belongs to the thioester dehydratase family. FabA subfamily. Homodimer.

The protein resides in the cytoplasm. The enzyme catalyses a (3R)-hydroxyacyl-[ACP] = a (2E)-enoyl-[ACP] + H2O. The catalysed reaction is (3R)-hydroxydecanoyl-[ACP] = (2E)-decenoyl-[ACP] + H2O. It carries out the reaction (2E)-decenoyl-[ACP] = (3Z)-decenoyl-[ACP]. It functions in the pathway lipid metabolism; fatty acid biosynthesis. In terms of biological role, necessary for the introduction of cis unsaturation into fatty acids. Catalyzes the dehydration of (3R)-3-hydroxydecanoyl-ACP to E-(2)-decenoyl-ACP and then its isomerization to Z-(3)-decenoyl-ACP. Can catalyze the dehydratase reaction for beta-hydroxyacyl-ACPs with saturated chain lengths up to 16:0, being most active on intermediate chain length. The protein is 3-hydroxydecanoyl-[acyl-carrier-protein] dehydratase of Rhodopseudomonas palustris (strain BisB18).